A 331-amino-acid polypeptide reads, in one-letter code: Mycothiol acetyltransferase (331 aa).

Glu-33 provides a ligand contact to 1D-myo-inositol 2-(L-cysteinylamino)-2-deoxy-alpha-D-glucopyranoside. Positions 59 to 86 are enriched in low complexity; it reads HAAEATAGSAASADPADPADPAAPADPA. The tract at residues 59 to 89 is disordered; the sequence is HAAEATAGSAASADPADPADPAAPADPADPA. Acetyl-CoA is bound at residue 115 to 120; the sequence is RRGHGS. Residues 183–331 form the N-acetyltransferase domain; it reads LRLDTFEESR…DVQLRATERG (149 aa). The 1D-myo-inositol 2-(L-cysteinylamino)-2-deoxy-alpha-D-glucopyranoside site is built by Glu-210, Lys-249, and Glu-261. Residue 265–267 coordinates acetyl-CoA; sequence VAT. A 1D-myo-inositol 2-(L-cysteinylamino)-2-deoxy-alpha-D-glucopyranoside-binding site is contributed by Tyr-299. 304-309 contacts acetyl-CoA; the sequence is NAPALR.

Belongs to the acetyltransferase family. MshD subfamily. As to quaternary structure, monomer.

It carries out the reaction 1D-myo-inositol 2-(L-cysteinylamino)-2-deoxy-alpha-D-glucopyranoside + acetyl-CoA = mycothiol + CoA + H(+). In terms of biological role, catalyzes the transfer of acetyl from acetyl-CoA to desacetylmycothiol (Cys-GlcN-Ins) to form mycothiol. The chain is Mycothiol acetyltransferase from Brachybacterium faecium (strain ATCC 43885 / DSM 4810 / JCM 11609 / LMG 19847 / NBRC 14762 / NCIMB 9860 / 6-10).